We begin with the raw amino-acid sequence, 304 residues long: MTRQMILAVGQQGPIARAETREQVVGRLLDMLTNAASRGVNFIVFPELALTTFFPRWHFTDEAELDSFYETEMPGPVVRPLFETAAELGIGFNLGYAELVVEGGVKRRFNTSILVDKSGKIVGKYRKIHLPGHKEYEAYRPFQHLEKRYFEPGDLGFPVYDVDAAKMGMFICNDRRWPETWRVMGLKGAEIICGGYNTPTHNPPVPQHDHLTSFHHLLSMQAGSYQNGAWSAAAGKVGMEEGCMLLGHSCIVAPTGEIVALTTTLEDEVITAAVDLDRCRELREHIFNFKAHRQPQHYGLIAEF.

The CN hydrolase domain occupies 5–276 (MILAVGQQGP…DEVITAAVDL (272 aa)). Active-site residues include glutamate 47, lysine 127, and cysteine 172.

Homotetramer.

It catalyses the reaction an N-carbamoyl-D-amino acid + H2O + 2 H(+) = a D-alpha-amino acid + NH4(+) + CO2. Functionally, the enzyme catalyzes the hydrolysis of N-carbamoyl-D-amino acids to the corresponding which are useful intermediates in the preparation of beta-lactam antibiotics. Industrial production of beta-lactam antibiotics is now being developed using this enzyme. The chain is N-carbamoyl-D-amino acid hydrolase from Rhizobium radiobacter (Agrobacterium tumefaciens).